The sequence spans 94 residues: Cell division topological specificity factor (94 aa).

This sequence belongs to the MinE family.

Its function is as follows. Prevents the cell division inhibition by proteins MinC and MinD at internal division sites while permitting inhibition at polar sites. This ensures cell division at the proper site by restricting the formation of a division septum at the midpoint of the long axis of the cell. In Clostridioides difficile (strain 630) (Peptoclostridium difficile), this protein is Cell division topological specificity factor.